The sequence spans 198 residues: Ribosome maturation factor RimP (198 aa).

Belongs to the RimP family.

The protein localises to the cytoplasm. Functionally, required for maturation of 30S ribosomal subunits. The polypeptide is Ribosome maturation factor RimP (Rhizobium etli (strain CIAT 652)).